The following is a 67-amino-acid chain: Large ribosomal subunit protein bL35 (67 aa).

Belongs to the bacterial ribosomal protein bL35 family.

This is Large ribosomal subunit protein bL35 from Zymomonas mobilis subsp. mobilis (strain ATCC 31821 / ZM4 / CP4).